The following is a 215-amino-acid chain: Ran-specific GTPase-activating protein 1 (215 aa).

2 stretches are compositionally biased toward basic and acidic residues: residues 1–18 (MSAE…EEQK) and 26–35 (VASKQTEEAK). A disordered region spans residues 1 to 78 (MSAEQEKKTQ…ASPEVHFEPI (78 aa)). A Phosphoserine modification is found at S70. Residues 74-210 (HFEPIVKLSA…FEKYQEENAK (137 aa)) form the RanBD1 domain.

It belongs to the RANBP1 family.

It localises to the cytoplasm. Functionally, stimulates the GTPase activity in the presence of RNA1. May potentiate the action of RanGAP1 (RNA1), thus playing the role of a negative regulator. The polypeptide is Ran-specific GTPase-activating protein 1 (sbp1) (Schizosaccharomyces pombe (strain 972 / ATCC 24843) (Fission yeast)).